Reading from the N-terminus, the 382-residue chain is uncharacterized protein (382 aa).

The next 12 helical transmembrane spans lie at 14-34 (GLLLLTLAIAVLNTLVPLWLA), 45-65 (VVSSSYFTGNLVGTLLTGYVI), 79-99 (FIFAAGCAGLGLMIGFWSWLA), 102-122 (FVAGVGCAMIWVVVESALMCS), 131-151 (LLAAYMMVYYVGTFLGQLLVS), 157-177 (LMSVLPWVTGLTLAGILPLLF), 204-224 (LGVNGCIISGIVLGSLYGLMP), 235-255 (ASIGFWMAVLVSAGILGQWPI), 270-290 (VQVFVVILGSIAMLSQAAMAP), 291-311 (ALFILGAAGFTLYPVAMAWAC), 325-345 (ALLLSYTVGSLLGPSFTAMLM), and 348-368 (FSDNLLFIMIASVSFIYLLML).

Belongs to the major facilitator superfamily. YcaD (TC 2.A.1.26) family.

It localises to the cell inner membrane. This is an uncharacterized protein from Escherichia coli O7:K1 (strain IAI39 / ExPEC).